The following is a 188-amino-acid chain: dCTP deaminase (188 aa).

DCTP-binding positions include 111-116 (KSTYAR), 135-137 (TLE), glutamine 156, tyrosine 170, lysine 179, and glutamine 180. The active-site Proton donor/acceptor is the glutamate 137.

Belongs to the dCTP deaminase family. As to quaternary structure, homotrimer.

It catalyses the reaction dCTP + H2O + H(+) = dUTP + NH4(+). It functions in the pathway pyrimidine metabolism; dUMP biosynthesis; dUMP from dCTP (dUTP route): step 1/2. Its function is as follows. Catalyzes the deamination of dCTP to dUTP. The chain is dCTP deaminase from Orientia tsutsugamushi (strain Boryong) (Rickettsia tsutsugamushi).